The primary structure comprises 486 residues: Glutamate--tRNA ligase (486 aa).

The 'HIGH' region motif lies at 11-21; sequence PSPTGLLHIGN. Residues 255–259 carry the 'KMSKS' region motif; sequence KLSKR. Lys258 contacts ATP.

It belongs to the class-I aminoacyl-tRNA synthetase family. Glutamate--tRNA ligase type 1 subfamily. Monomer.

Its subcellular location is the cytoplasm. The catalysed reaction is tRNA(Glu) + L-glutamate + ATP = L-glutamyl-tRNA(Glu) + AMP + diphosphate. Catalyzes the attachment of glutamate to tRNA(Glu) in a two-step reaction: glutamate is first activated by ATP to form Glu-AMP and then transferred to the acceptor end of tRNA(Glu). This Streptococcus pneumoniae (strain ATCC BAA-255 / R6) protein is Glutamate--tRNA ligase.